We begin with the raw amino-acid sequence, 164 residues long: Transcriptional regulator MraZ (164 aa).

SpoVT-AbrB domains are found at residues 7 to 63 (REQH…EPAV) and 92 to 135 (LDQL…NPDR).

It belongs to the MraZ family. As to quaternary structure, forms oligomers.

Its subcellular location is the cytoplasm. The protein localises to the nucleoid. In Chlorobaculum parvum (strain DSM 263 / NCIMB 8327) (Chlorobium vibrioforme subsp. thiosulfatophilum), this protein is Transcriptional regulator MraZ.